The chain runs to 156 residues: Pilin-like protein PilA1 (156 aa).

Residues 1–5 (MTRRG) constitute a propeptide, leader sequence. At leucine 6 the chain carries N-methylleucine. The helical transmembrane segment at 6 to 29 (LTLLELLLVLGILGVLLGLALPLL) threads the bilayer.

Its subcellular location is the cell inner membrane. The protein localises to the cell outer membrane. The protein resides in the periplasm. Its function is as follows. Plays an essential role in natural DNA transformation but is not required for pilus biogenesis. This Thermus thermophilus (strain ATCC BAA-163 / DSM 7039 / HB27) protein is Pilin-like protein PilA1 (pilA1).